A 641-amino-acid chain; its full sequence is Chaperone protein DnaK (641 aa).

Thr200 carries the post-translational modification Phosphothreonine; by autocatalysis. Residues 606–623 (AEQGGNADAASGNAQASK) show a composition bias toward low complexity. The disordered stretch occupies residues 606–627 (AEQGGNADAASGNAQASKAADD).

It belongs to the heat shock protein 70 family.

Acts as a chaperone. The sequence is that of Chaperone protein DnaK from Xanthomonas euvesicatoria pv. vesicatoria (strain 85-10) (Xanthomonas campestris pv. vesicatoria).